We begin with the raw amino-acid sequence, 629 residues long: DNA topoisomerase 4 subunit B (629 aa).

Residues tyrosine 4, asparagine 41, aspartate 68, 109–115 (GLHGVGI), and lysine 333 each bind ATP. One can recognise a Toprim domain in the interval 411–524 (AELFLVEGDS…AGHVYVAMPP (114 aa)). Mg(2+)-binding residues include glutamate 417, aspartate 489, and aspartate 491.

It belongs to the type II topoisomerase family. ParE type 1 subfamily. As to quaternary structure, heterotetramer composed of ParC and ParE. It depends on Mg(2+) as a cofactor. Mn(2+) serves as cofactor. The cofactor is Ca(2+).

It catalyses the reaction ATP-dependent breakage, passage and rejoining of double-stranded DNA.. Its function is as follows. Topoisomerase IV is essential for chromosome segregation. It relaxes supercoiled DNA. Performs the decatenation events required during the replication of a circular DNA molecule. This Pseudomonas aeruginosa (strain ATCC 15692 / DSM 22644 / CIP 104116 / JCM 14847 / LMG 12228 / 1C / PRS 101 / PAO1) protein is DNA topoisomerase 4 subunit B.